Consider the following 660-residue polypeptide: GRIP and coiled-coil domain-containing protein 2 (660 aa).

Positions 1 to 28 are disordered; it reads MSAPESSISPVPPPGSSSGGGKKLDSLP. Coiled coils occupy residues 30–92, 115–464, and 517–596; these read EDLV…VENN, EWKE…KAIA, and DEYR…EYLK. A GRIP domain is found at 585-636; sequence ELSNEKNMEYLKNVFVQFLKPESVPAERDQLVIVLQRVLHLSPKEVEILKAA.

The sequence is that of GRIP and coiled-coil domain-containing protein 2 from Caenorhabditis elegans.